The sequence spans 368 residues: tRNA/tmRNA (uracil-C(5))-methyltransferase (368 aa).

Gln-192, Tyr-220, Asn-225, Glu-241, and Asp-301 together coordinate S-adenosyl-L-methionine. Cys-326 functions as the Nucleophile in the catalytic mechanism. Glu-360 acts as the Proton acceptor in catalysis.

Belongs to the class I-like SAM-binding methyltransferase superfamily. RNA M5U methyltransferase family. TrmA subfamily.

The enzyme catalyses uridine(54) in tRNA + S-adenosyl-L-methionine = 5-methyluridine(54) in tRNA + S-adenosyl-L-homocysteine + H(+). It carries out the reaction uridine(341) in tmRNA + S-adenosyl-L-methionine = 5-methyluridine(341) in tmRNA + S-adenosyl-L-homocysteine + H(+). Dual-specificity methyltransferase that catalyzes the formation of 5-methyluridine at position 54 (m5U54) in all tRNAs, and that of position 341 (m5U341) in tmRNA (transfer-mRNA). The protein is tRNA/tmRNA (uracil-C(5))-methyltransferase of Actinobacillus pleuropneumoniae serotype 3 (strain JL03).